The primary structure comprises 190 residues: Imidazoleglycerol-phosphate dehydratase (190 aa).

It belongs to the imidazoleglycerol-phosphate dehydratase family.

Its subcellular location is the cytoplasm. The enzyme catalyses D-erythro-1-(imidazol-4-yl)glycerol 3-phosphate = 3-(imidazol-4-yl)-2-oxopropyl phosphate + H2O. Its pathway is amino-acid biosynthesis; L-histidine biosynthesis; L-histidine from 5-phospho-alpha-D-ribose 1-diphosphate: step 6/9. The polypeptide is Imidazoleglycerol-phosphate dehydratase (Campylobacter fetus subsp. fetus (strain 82-40)).